The sequence spans 344 residues: Ferredoxin--NADP reductase (344 aa).

8 residues coordinate FAD: Ser12, Asp31, Lys39, Tyr43, Val83, Ile118, Asp285, and Ser326.

This sequence belongs to the ferredoxin--NADP reductase type 2 family. As to quaternary structure, homodimer. FAD serves as cofactor.

The catalysed reaction is 2 reduced [2Fe-2S]-[ferredoxin] + NADP(+) + H(+) = 2 oxidized [2Fe-2S]-[ferredoxin] + NADPH. This is Ferredoxin--NADP reductase from Staphylococcus aureus (strain JH1).